The chain runs to 317 residues: Putative pyridoxal kinase BUD17 (317 aa).

Residues Ser16 and Tyr128 each contribute to the substrate site. ATP contacts are provided by residues 190–191 (TS) and 220–232 (EIPK…SGSG). Asp233 contacts substrate.

Belongs to the pyridoxine kinase family. Requires a divalent metal cation as cofactor.

The protein localises to the cytoplasm. The protein resides in the nucleus. The catalysed reaction is pyridoxal + ATP = pyridoxal 5'-phosphate + ADP + H(+). In terms of biological role, required for synthesis of pyridoxal-5-phosphate from vitamin B6. Important for bud site selection. In Saccharomyces cerevisiae (strain ATCC 204508 / S288c) (Baker's yeast), this protein is Putative pyridoxal kinase BUD17 (BUD17).